The chain runs to 554 residues: 2-succinyl-5-enolpyruvyl-6-hydroxy-3-cyclohexene-1-carboxylate synthase (554 aa).

It belongs to the TPP enzyme family. MenD subfamily. Homodimer. Mg(2+) is required as a cofactor. Mn(2+) serves as cofactor. The cofactor is thiamine diphosphate.

The catalysed reaction is isochorismate + 2-oxoglutarate + H(+) = 5-enolpyruvoyl-6-hydroxy-2-succinyl-cyclohex-3-ene-1-carboxylate + CO2. It functions in the pathway quinol/quinone metabolism; 1,4-dihydroxy-2-naphthoate biosynthesis; 1,4-dihydroxy-2-naphthoate from chorismate: step 2/7. Its pathway is quinol/quinone metabolism; menaquinone biosynthesis. Its function is as follows. Catalyzes the thiamine diphosphate-dependent decarboxylation of 2-oxoglutarate and the subsequent addition of the resulting succinic semialdehyde-thiamine pyrophosphate anion to isochorismate to yield 2-succinyl-5-enolpyruvyl-6-hydroxy-3-cyclohexene-1-carboxylate (SEPHCHC). This chain is 2-succinyl-5-enolpyruvyl-6-hydroxy-3-cyclohexene-1-carboxylate synthase, found in Lactococcus lactis subsp. cremoris (strain SK11).